Here is a 141-residue protein sequence, read N- to C-terminus: Hemoglobin subunit alpha (141 aa).

The region spanning 1–141 (VLSAADKSNV…VSTVLTSKYR (141 aa)) is the Globin domain. Serine 3 is subject to Phosphoserine. N6-succinyllysine occurs at positions 7 and 11. The residue at position 16 (lysine 16) is an N6-acetyllysine; alternate. Lysine 16 is modified (N6-succinyllysine; alternate). Tyrosine 24 carries the post-translational modification Phosphotyrosine. Phosphoserine is present on serine 35. Lysine 40 is subject to N6-succinyllysine. Residue serine 49 is modified to Phosphoserine. Histidine 58 contacts O2. Histidine 87 lines the heme b pocket. Serine 102 carries the phosphoserine modification. A Phosphothreonine modification is found at threonine 108. Phosphoserine is present on serine 124. Residues threonine 134 and threonine 137 each carry the phosphothreonine modification. Serine 138 is subject to Phosphoserine.

Belongs to the globin family. As to quaternary structure, heterotetramer of two alpha chains and two beta chains. In terms of tissue distribution, red blood cells.

Functionally, involved in oxygen transport from the lung to the various peripheral tissues. In terms of biological role, hemopressin acts as an antagonist peptide of the cannabinoid receptor CNR1. Hemopressin-binding efficiently blocks cannabinoid receptor CNR1 and subsequent signaling. In Rangifer tarandus (Reindeer), this protein is Hemoglobin subunit alpha (HBA).